The following is a 317-amino-acid chain: MKQFNKPEFGIVKESPNKFYGKFEAAPLERGFAVTLGNALRRTLLSSTPGASVFAIKIAGAQHEFTSISGIEENVTRIVLNVKKLILRIDSAIYNDDETVELKVGTSTIGPVTAGSLVLPAGVEVLNKDLVIANVAEGGNLDLVLYAKNSRGYKTFKENKELKDVVPGMITIDSNYSPIIKVAYGSTPINLGKAQDFEKLILEVETDGSILASDAVSLASKILISHFDVFTTLAEEVEEVAIMGVETVEEKELDKPVEELEFTQRSLNCLKRAGISTLRELVSKTEDEIQDIRNLGRKSLKEIKDKVAALELTFKQN.

The tract at residues 1-234 (MKQFNKPEFG…SHFDVFTTLA (234 aa)) is alpha N-terminal domain (alpha-NTD). The alpha C-terminal domain (alpha-CTD) stretch occupies residues 249 to 317 (EEKELDKPVE…AALELTFKQN (69 aa)).

This sequence belongs to the RNA polymerase alpha chain family. Homodimer. The RNAP catalytic core consists of 2 alpha, 1 beta, 1 beta' and 1 omega subunit. When a sigma factor is associated with the core the holoenzyme is formed, which can initiate transcription.

The enzyme catalyses RNA(n) + a ribonucleoside 5'-triphosphate = RNA(n+1) + diphosphate. In terms of biological role, DNA-dependent RNA polymerase catalyzes the transcription of DNA into RNA using the four ribonucleoside triphosphates as substrates. This is DNA-directed RNA polymerase subunit alpha from Mesoplasma florum (strain ATCC 33453 / NBRC 100688 / NCTC 11704 / L1) (Acholeplasma florum).